Here is a 135-residue protein sequence, read N- to C-terminus: Small ribosomal subunit protein bS18 (135 aa).

The segment at 1-65 is disordered; it reads MARPDMGGPK…GDEGGGRRGF (65 aa). A compositionally biased stretch (gly residues) spans 9–41; the sequence is PKTGGFGGPRSGGFGGGGGGGGGFGGGGFGGGR. The span at 42–61 shows a compositional bias: basic and acidic residues; that stretch reads GGDRGDRGDRDDRGGDEGGG.

Belongs to the bacterial ribosomal protein bS18 family. Part of the 30S ribosomal subunit. Forms a tight heterodimer with protein bS6.

Its function is as follows. Binds as a heterodimer with protein bS6 to the central domain of the 16S rRNA, where it helps stabilize the platform of the 30S subunit. In Anaeromyxobacter sp. (strain K), this protein is Small ribosomal subunit protein bS18.